A 125-amino-acid polypeptide reads, in one-letter code: MRLAGVNLPLNKHAVIALTYVYGIGNTSAKNILAKAGVAPDKKISELSDEEAHAIREIIGNEYTVEGEARAEQQLSIKRLMDIGCYRGLRHRRSLPARGQRTRTNARTRKGKRKTVAGKKKAGKK.

The interval 92 to 125 is disordered; sequence RRSLPARGQRTRTNARTRKGKRKTVAGKKKAGKK.

Belongs to the universal ribosomal protein uS13 family. Part of the 30S ribosomal subunit. Forms a loose heterodimer with protein S19. Forms two bridges to the 50S subunit in the 70S ribosome.

Functionally, located at the top of the head of the 30S subunit, it contacts several helices of the 16S rRNA. In the 70S ribosome it contacts the 23S rRNA (bridge B1a) and protein L5 of the 50S subunit (bridge B1b), connecting the 2 subunits; these bridges are implicated in subunit movement. Contacts the tRNAs in the A and P-sites. The sequence is that of Small ribosomal subunit protein uS13 from Chlorobaculum parvum (strain DSM 263 / NCIMB 8327) (Chlorobium vibrioforme subsp. thiosulfatophilum).